We begin with the raw amino-acid sequence, 246 residues long: Exosome complex component Rrp41 (246 aa).

The protein belongs to the RNase PH family. Rrp41 subfamily. As to quaternary structure, component of the archaeal exosome complex. Forms a hexameric ring-like arrangement composed of 3 Rrp41-Rrp42 heterodimers. The hexameric ring associates with a trimer of Rrp4 and/or Csl4 subunits.

The protein localises to the cytoplasm. Catalytic component of the exosome, which is a complex involved in RNA degradation. Has 3'-&gt;5' exoribonuclease activity. Can also synthesize heteromeric RNA-tails. This is Exosome complex component Rrp41 from Aeropyrum pernix (strain ATCC 700893 / DSM 11879 / JCM 9820 / NBRC 100138 / K1).